Reading from the N-terminus, the 208-residue chain is F-box/kelch-repeat protein At2g43270 (208 aa).

Residues 1–44 (MIYVVPDLLEEIFLGLPLKSILRFKTVSKQWRSILESKSFAERR) form the F-box domain. The Kelch repeat unit spans residues 149 to 200 (RDKFNGSYKVVRMCFSPVEKCEVLDVETGEWSELNPPPNDIDVGRKSVCVNG).

In Arabidopsis thaliana (Mouse-ear cress), this protein is F-box/kelch-repeat protein At2g43270.